A 369-amino-acid polypeptide reads, in one-letter code: Probable dual-specificity RNA methyltransferase RlmN (369 aa).

Residue Glu-98 is the Proton acceptor of the active site. A Radical SAM core domain is found at 106–341 (STSRNTLCIS…VTVRKSRGAD (236 aa)). Cys-113 and Cys-346 are oxidised to a cystine. [4Fe-4S] cluster contacts are provided by Cys-120, Cys-124, and Cys-127. S-adenosyl-L-methionine is bound by residues 171-172 (GE), Ser-204, 227-229 (SLH), and Asn-303. Catalysis depends on Cys-346, which acts as the S-methylcysteine intermediate.

The protein belongs to the radical SAM superfamily. RlmN family. [4Fe-4S] cluster is required as a cofactor.

Its subcellular location is the cytoplasm. It catalyses the reaction adenosine(2503) in 23S rRNA + 2 reduced [2Fe-2S]-[ferredoxin] + 2 S-adenosyl-L-methionine = 2-methyladenosine(2503) in 23S rRNA + 5'-deoxyadenosine + L-methionine + 2 oxidized [2Fe-2S]-[ferredoxin] + S-adenosyl-L-homocysteine. It carries out the reaction adenosine(37) in tRNA + 2 reduced [2Fe-2S]-[ferredoxin] + 2 S-adenosyl-L-methionine = 2-methyladenosine(37) in tRNA + 5'-deoxyadenosine + L-methionine + 2 oxidized [2Fe-2S]-[ferredoxin] + S-adenosyl-L-homocysteine. In terms of biological role, specifically methylates position 2 of adenine 2503 in 23S rRNA and position 2 of adenine 37 in tRNAs. The sequence is that of Probable dual-specificity RNA methyltransferase RlmN from Chloroherpeton thalassium (strain ATCC 35110 / GB-78).